Here is a 245-residue protein sequence, read N- to C-terminus: 1-(5-phosphoribosyl)-5-[(5-phosphoribosylamino)methylideneamino] imidazole-4-carboxamide isomerase (245 aa).

D11 serves as the catalytic Proton acceptor. Residue D132 is the Proton donor of the active site.

The protein belongs to the HisA/HisF family.

The protein resides in the cytoplasm. The catalysed reaction is 1-(5-phospho-beta-D-ribosyl)-5-[(5-phospho-beta-D-ribosylamino)methylideneamino]imidazole-4-carboxamide = 5-[(5-phospho-1-deoxy-D-ribulos-1-ylimino)methylamino]-1-(5-phospho-beta-D-ribosyl)imidazole-4-carboxamide. The protein operates within amino-acid biosynthesis; L-histidine biosynthesis; L-histidine from 5-phospho-alpha-D-ribose 1-diphosphate: step 4/9. The polypeptide is 1-(5-phosphoribosyl)-5-[(5-phosphoribosylamino)methylideneamino] imidazole-4-carboxamide isomerase (Bacillus velezensis (strain DSM 23117 / BGSC 10A6 / LMG 26770 / FZB42) (Bacillus amyloliquefaciens subsp. plantarum)).